Consider the following 235-residue polypeptide: RNA-free ribonuclease P (235 aa).

This sequence belongs to the HARP family.

The catalysed reaction is Endonucleolytic cleavage of RNA, removing 5'-extranucleotides from tRNA precursor.. Functionally, RNA-free RNase P that catalyzes the removal of the 5'-leader sequence from pre-tRNA to produce the mature 5'-terminus. The polypeptide is RNA-free ribonuclease P (Methanothrix thermoacetophila (strain DSM 6194 / JCM 14653 / NBRC 101360 / PT) (Methanosaeta thermophila)).